The following is a 206-amino-acid chain: MARYLGPKLKLSRREGTDLFLKSGVRAIDTKCKIEQAPGQHGARKPRLSDYGVQLREKQKVRRIYGVLERQFRNYYKEAARLKGNTGENLLALLEGRLDNVVYRMGFGATRAEARQLVSHKAIMVNGRVVNIASYQVSPNDVVSVREKAKKQSRVKAALELAEQREKPTWLEVDAGKMEGTFKRKPERTDLSADINEHLIVELYSK.

One can recognise an S4 RNA-binding domain in the interval 96 to 156 (GRLDNVVYRM…EKAKKQSRVK (61 aa)).

This sequence belongs to the universal ribosomal protein uS4 family. As to quaternary structure, part of the 30S ribosomal subunit. Contacts protein S5. The interaction surface between S4 and S5 is involved in control of translational fidelity.

One of the primary rRNA binding proteins, it binds directly to 16S rRNA where it nucleates assembly of the body of the 30S subunit. In terms of biological role, with S5 and S12 plays an important role in translational accuracy. This Cronobacter sakazakii (strain ATCC BAA-894) (Enterobacter sakazakii) protein is Small ribosomal subunit protein uS4.